Here is a 419-residue protein sequence, read N- to C-terminus: Innexin inx5 (419 aa).

The Cytoplasmic segment spans residues 1 to 21; that stretch reads MFSAVKPLSKYLQFKSIRIYD. A helical membrane pass occupies residues 22 to 42; sequence SVFTIHSRCTVVILLTCSLLL. The Extracellular portion of the chain corresponds to 43-162; that stretch reads SARQYFGDPI…QTERQYLRYY (120 aa). Residues 163 to 183 traverse the membrane as a helical segment; that stretch reads QWVIILLLFQSFVFYFPSCLW. Residues 184-238 are Cytoplasmic-facing; that stretch reads KVWEGRRLKQLCSEVGDALLSEETYNTRLRMLVKYFTTDYEDMHFCYMAKYVFCE. The helical transmembrane segment at 239–259 threads the bilayer; that stretch reads VLNFLISVVNIIVLEVFLNGF. Residues 260–320 are Extracellular-facing; it reads WSKYLRALAT…ILPLNILNEK (61 aa). The chain crosses the membrane as a helical span at residues 321-341; sequence IFVFLWAWFLLMALMSGLNLL. The Cytoplasmic segment spans residues 342–419; it reads CRLAMICSRY…ASGSTLESPV (78 aa).

It belongs to the pannexin family. As to expression, expressed in the cortex of the pupal CNS and at low levels in the wing imaginal disk.

It is found in the cell membrane. It localises to the cell junction. Its subcellular location is the gap junction. In terms of biological role, structural component of the gap junctions. This Drosophila melanogaster (Fruit fly) protein is Innexin inx5 (Inx5).